We begin with the raw amino-acid sequence, 124 residues long: Large ribosomal subunit protein bL12 (124 aa).

Belongs to the bacterial ribosomal protein bL12 family. In terms of assembly, homodimer. Part of the ribosomal stalk of the 50S ribosomal subunit. Forms a multimeric L10(L12)X complex, where L10 forms an elongated spine to which 2 to 4 L12 dimers bind in a sequential fashion. Binds GTP-bound translation factors.

Functionally, forms part of the ribosomal stalk which helps the ribosome interact with GTP-bound translation factors. Is thus essential for accurate translation. The protein is Large ribosomal subunit protein bL12 of Janthinobacterium sp. (strain Marseille) (Minibacterium massiliensis).